Reading from the N-terminus, the 177-residue chain is ATP-dependent protease subunit HslV (177 aa).

Residue T6 is part of the active site. Na(+) is bound by residues A162, C165, and T168.

The protein belongs to the peptidase T1B family. HslV subfamily. A double ring-shaped homohexamer of HslV is capped on each side by a ring-shaped HslU homohexamer. The assembly of the HslU/HslV complex is dependent on binding of ATP.

It is found in the cytoplasm. It carries out the reaction ATP-dependent cleavage of peptide bonds with broad specificity.. Its activity is regulated as follows. Allosterically activated by HslU binding. In terms of biological role, protease subunit of a proteasome-like degradation complex believed to be a general protein degrading machinery. This Lawsonia intracellularis (strain PHE/MN1-00) protein is ATP-dependent protease subunit HslV.